A 300-amino-acid polypeptide reads, in one-letter code: E3 ubiquitin-protein ligase RNF212B (300 aa).

The RING-type zinc finger occupies 6–40; that stretch reads CNQCFRKDGAHFFVTSCGHIFCKKCVTLEKCAVCG. Positions 87–124 form a coiled coil; that stretch reads LLIAFYKHRITKLETAMQEAQQALVSQDKELSVLRKEN. The segment at 141 to 232 is disordered; that stretch reads YQGSRSITPR…SYRTSSASSG (92 aa). Residues 155–165 show a composition bias toward polar residues; it reads TSPSQSVTPRP. A compositionally biased stretch (low complexity) spans 166–182; that stretch reads SFQHSSQVVSRSSSAES. Residues 191 to 200 are compositionally biased toward gly residues; that stretch reads GSLGQGGRGL. Polar residues predominate over residues 211–232; the sequence is NETPSPASTHSLSYRTSSASSG.

As to quaternary structure, homodimer. Autoubiquitinated.

The protein resides in the chromosome. It carries out the reaction S-ubiquitinyl-[E2 ubiquitin-conjugating enzyme]-L-cysteine + [acceptor protein]-L-lysine = [E2 ubiquitin-conjugating enzyme]-L-cysteine + N(6)-ubiquitinyl-[acceptor protein]-L-lysine.. Its pathway is protein modification; protein ubiquitination. Functionally, ubiquitin E3 ligase that acts as a crucial factor for crossing-over (CO) formation during meiosis. Essential for normal prophase I progression and for ensuring appropriate CO designation in meiosis. Recruits key components of the cross-over machinery either directly ou indirectly, leading to the activation of the MutL-gamma complex. The function of RNF212B in CO designation is dependent on its catalytic activity. This chain is E3 ubiquitin-protein ligase RNF212B (RNF212B), found in Homo sapiens (Human).